The chain runs to 394 residues: Elongation factor Tu (394 aa).

Positions 10 to 204 (KPHVNIGTIG…AVDSYIPQPV (195 aa)) constitute a tr-type G domain. Positions 19-26 (GHVDHGKT) are G1. 19 to 26 (GHVDHGKT) is a binding site for GTP. Position 26 (Thr-26) interacts with Mg(2+). The segment at 60-64 (GITIS) is G2. The interval 81–84 (DCPG) is G3. Residues 81–85 (DCPGH) and 136–139 (NKID) contribute to the GTP site. The interval 136-139 (NKID) is G4. Residues 174–176 (SAL) are G5.

This sequence belongs to the TRAFAC class translation factor GTPase superfamily. Classic translation factor GTPase family. EF-Tu/EF-1A subfamily. As to quaternary structure, monomer.

It is found in the cytoplasm. It carries out the reaction GTP + H2O = GDP + phosphate + H(+). Its function is as follows. GTP hydrolase that promotes the GTP-dependent binding of aminoacyl-tRNA to the A-site of ribosomes during protein biosynthesis. The polypeptide is Elongation factor Tu (Rickettsia peacockii (strain Rustic)).